The sequence spans 237 residues: MKKQNIPKEISEFITKEEIVMFQELQIKIAELNNKTNLTRLIKGDDYWISQVFDSIWPFKTFPNINFDNKKFLDIGSGCGFPGLAYAITHPNSEIYLIDSSKKKTDALKLLIKEINFKNNIHIINDRIENLAHQSSMRNSFNIATTRAVSNPSTVSEYILPMLKKEGLGVLYCGKWTDEENKNLDKTLEILEGKFKETKKILLPRSKGTRNIILIQPKNLCPEIYPRKIGKPEKHPL.

S-adenosyl-L-methionine is bound by residues G76, F81, 99-101 (DSS), 128-129 (IE), and R147.

This sequence belongs to the methyltransferase superfamily. RNA methyltransferase RsmG family.

It localises to the cytoplasm. Functionally, specifically methylates the N7 position of a guanine in 16S rRNA. The polypeptide is Ribosomal RNA small subunit methyltransferase G (Prochlorococcus marinus (strain MIT 9312)).